Here is a 131-residue protein sequence, read N- to C-terminus: MVPLFITSDSALTYSPLPEPPPTPALGGQRGPPTCQCPDFPYPVPPSEGCPSGRLLLSLHWDWGRGAGGSWSGGAWPGSPGWRLARGPAHGASAESLGPLGKALVTGWEGGWRGGQGGACSPWYFPIPAAL.

The disordered stretch occupies residues 13-32; it reads TYSPLPEPPPTPALGGQRGP.

This is an uncharacterized protein from Homo sapiens (Human).